We begin with the raw amino-acid sequence, 416 residues long: Kynureninase (416 aa).

Residues T97, S98, 129-132 (FPTD), T172, D201, H204, and Y226 each bind pyridoxal 5'-phosphate. K227 carries the N6-(pyridoxal phosphate)lysine modification. Residues W256 and T282 each coordinate pyridoxal 5'-phosphate.

It belongs to the kynureninase family. Homodimer. Pyridoxal 5'-phosphate serves as cofactor.

The enzyme catalyses L-kynurenine + H2O = anthranilate + L-alanine + H(+). It carries out the reaction 3-hydroxy-L-kynurenine + H2O = 3-hydroxyanthranilate + L-alanine + H(+). Its pathway is amino-acid degradation; L-kynurenine degradation; L-alanine and anthranilate from L-kynurenine: step 1/1. It participates in cofactor biosynthesis; NAD(+) biosynthesis; quinolinate from L-kynurenine: step 2/3. Its function is as follows. Catalyzes the cleavage of L-kynurenine (L-Kyn) and L-3-hydroxykynurenine (L-3OHKyn) into anthranilic acid (AA) and 3-hydroxyanthranilic acid (3-OHAA), respectively. The sequence is that of Kynureninase from Pseudomonas fluorescens.